A 1434-amino-acid chain; its full sequence is Probable ATP-dependent DNA helicase HFM1 (1434 aa).

The Helicase ATP-binding domain maps to 289–476 (DDLLYTDRNF…WLSDGERPAV (188 aa)). Residue 302-309 (APTGSGKT) coordinates ATP. The DEAH box motif lies at 410-413 (DEVH). The 205-residue stretch at 514–718 (KVYSVIRTYS…DVNIALDWIR (205 aa)) folds into the Helicase C-terminal domain. The SEC63 domain occupies 775–1089 (PTEAGRLMAW…VGLDIHQKFT (315 aa)). The tract at residues 1110 to 1130 (TDISHSDYSGRATATGSSKGM) is disordered. Residues 1141–1156 (CHHHCKNKHACGHDCC) form a C4-type zinc finger. The interval 1294 to 1333 (GFGDTRDSSLGGSKLPFQKSSSRFQRDNSNSFASSPGKPD) is disordered. Positions 1311–1327 (QKSSSRFQRDNSNSFAS) are enriched in polar residues.

This sequence belongs to the helicase family. SKI2 subfamily. Zn(2+) is required as a cofactor.

The enzyme catalyses Couples ATP hydrolysis with the unwinding of duplex DNA by translocating in the 3'-5' direction.. It carries out the reaction ATP + H2O = ADP + phosphate + H(+). In terms of biological role, required for crossover formation and complete synapsis of homologous chromosomes during meiosis. The sequence is that of Probable ATP-dependent DNA helicase HFM1 from Mus musculus (Mouse).